A 224-amino-acid polypeptide reads, in one-letter code: Transcription cofactor HES-6 (224 aa).

The segment at 1–31 (MAPSQAPSRDRAGQEDEDRWEARGDRKARKP) is disordered. Residues 8–25 (SRDRAGQEDEDRWEARGD) show a composition bias toward basic and acidic residues. One can recognise a bHLH domain in the interval 25–77 (DRKARKPLVEKKRRARINESLQELRLLLAGTEVQAKLENAEVLELTVRRVQGA). In terms of domain architecture, Orange spans 96-129 (FAAGYIQCMHEVHTFVSTCQAIDATVSAELLNHL). Residues 146 to 209 (GDSLAGLPGG…GPDLVSTSLG (64 aa)) are disordered. The segment covering 158 to 171 (RSSWPPGGSPESPL) has biased composition (low complexity). The segment covering 181–190 (LCSDLEEIPE) has biased composition (acidic residues). A WRPW motif motif is present at residues 221–224 (WRPW).

As to quaternary structure, transcription repression requires formation of a complex with a corepressor protein of the Groucho/TLE family. Interacts with HES1. Expressed in both undifferentiated and differentiated cells. High levels of expression are observed in several embryonic tissues including the nervous system, muscle and thymus. In the nervous system, initially expressed in the closing neural tube, then in the spinal cord, cranial and dorsal root ganglia, and brain neuroepithelium. Also expressed in epithelial cells of the embryonic respiratory, urinary and digestive systems. In the limb buds, expressed in skeletal muscle and presumptive tendons.

Its subcellular location is the nucleus. Functionally, does not bind DNA itself but suppresses both HES1-mediated N box-dependent transcriptional repression and binding of HES1 to E box sequences. Also suppresses HES1-mediated inhibition of the heterodimer formed by ASCL1/MASH1 and TCF3/E47, allowing ASCL1 and TCF3 to up-regulate transcription in its presence. Promotes cell differentiation. This Mus musculus (Mouse) protein is Transcription cofactor HES-6.